Reading from the N-terminus, the 142-residue chain is Large ribosomal subunit protein uL11 (142 aa).

The protein belongs to the universal ribosomal protein uL11 family. As to quaternary structure, part of the ribosomal stalk of the 50S ribosomal subunit. Interacts with L10 and the large rRNA to form the base of the stalk. L10 forms an elongated spine to which L12 dimers bind in a sequential fashion forming a multimeric L10(L12)X complex. Post-translationally, one or more lysine residues are methylated.

Forms part of the ribosomal stalk which helps the ribosome interact with GTP-bound translation factors. The protein is Large ribosomal subunit protein uL11 of Bartonella quintana (strain Toulouse) (Rochalimaea quintana).